The primary structure comprises 615 residues: Crinkler effector protein 15 (615 aa).

A signal peptide spans 1-17; sequence MVKLVCAIVGVAGSAFP. The tract at residues 18–54 is LQLFLAK domain; it reads VDIDASQLVGDLKKAIKAENAMTFTGDAKDLQLFLAK. The segment at 55 to 136 is DWL domain; it reads QPVDDESGKE…NMELPSSEQI (82 aa). An HVLVXXP motif motif is present at residues 137–143; it reads HVLVVVP. Asn-531 is a glycosylation site (N-linked (GlcNAc...) asparagine).

This sequence belongs to the Crinkler effector family.

It localises to the secreted. Its subcellular location is the host nucleus. Its function is as follows. Secreted effector that elicits necrosis in host plants, a characteristic of plant innate immunity. This Phytophthora infestans (Potato late blight agent) protein is Crinkler effector protein 15.